Consider the following 561-residue polypeptide: (+)-alpha-pinene synthase TPS2FN (561 aa).

Residues arginine 276, aspartate 313, aspartate 317, arginine 455, and aspartate 458 each coordinate (2E)-geranyl diphosphate. Residues aspartate 313 and aspartate 317 each contribute to the Mg(2+) site. Positions 313-317 (DDIYD) match the DDXXD motif motif. Aspartate 458, threonine 462, and glutamate 466 together coordinate Mg(2+).

Belongs to the terpene synthase family. Tpsb subfamily. The cofactor is Mg(2+). Mn(2+) serves as cofactor. In terms of tissue distribution, expressed in glandular trichomes two to four weeks after flowering onset.

It carries out the reaction (2E)-geranyl diphosphate = (1R,5R)-alpha-pinene + diphosphate. The catalysed reaction is (2E)-geranyl diphosphate = (4S)-limonene + diphosphate. The enzyme catalyses (2E)-geranyl diphosphate = sabinene + diphosphate. It catalyses the reaction (2E)-geranyl diphosphate = beta-phellandrene + diphosphate. It carries out the reaction (2E)-geranyl diphosphate = camphene + diphosphate. The catalysed reaction is (2E)-geranyl diphosphate = isoterpinolene + diphosphate. It participates in secondary metabolite biosynthesis; terpenoid biosynthesis. The protein operates within terpene metabolism; (-)-alpha-pinene biosynthesis; (-)-alpha-pinene from geranyl diphosphate: step 1/1. Involved in monoterpene (C10) olefins biosynthesis, constituants of cannabinoids and terpenoids-rich resins. Catalyzes mainly the conversion of (2E)-geranyl diphosphate to (+)-alpha-pinene, and also produces minor products such as camphene, sabinene, beta-phellandrene, (-)-limonene and isoterpinolene. The polypeptide is (+)-alpha-pinene synthase TPS2FN (Cannabis sativa (Hemp)).